We begin with the raw amino-acid sequence, 419 residues long: Carboxypeptidase A1 (419 aa).

The first 16 residues, 1-16 (MWGLLIFSVLLGGVLA), serve as a signal peptide directing secretion. The propeptide at 17–110 (KEDFVGHQVL…QEQMFASQGR (94 aa)) is activation peptide. Residues 121–414 (TYHTLEEIYD…LALLTIMEHT (294 aa)) enclose the Peptidase M14 domain. The Zn(2+) site is built by His179 and Glu182. Residues 179–182 (HSRE), Arg237, and 254–255 (NR) contribute to the substrate site. Cysteines 248 and 271 form a disulfide. His306 provides a ligand contact to Zn(2+). Substrate contacts are provided by residues 307 to 308 (SY) and Tyr358. Glu380 functions as the Proton donor/acceptor in the catalytic mechanism.

It belongs to the peptidase M14 family. In terms of assembly, monomer. May form a complex with proelastase 2. It depends on Zn(2+) as a cofactor.

Its subcellular location is the secreted. It carries out the reaction Release of a C-terminal amino acid, but little or no action with -Asp, -Glu, -Arg, -Lys or -Pro.. The enzyme catalyses leukotriene C4 + H2O = leukotriene F4 + glycine. Carboxypeptidase that catalyzes the release of a C-terminal amino acid, but has little or no action with -Asp, -Glu, -Arg, -Lys or -Pro. Catalyzes the conversion of leukotriene C4 to leukotriene F4 via the hydrolysis of an amide bond. The polypeptide is Carboxypeptidase A1 (CPA1) (Sus scrofa (Pig)).